The primary structure comprises 357 residues: Probable leucine aminopeptidase MCYG_04170 (357 aa).

The first 15 residues, 1 to 15 (MKVLAALALSALALA), serve as a signal peptide directing secretion. Residue asparagine 76 is glycosylated (N-linked (GlcNAc...) asparagine). Histidine 167 and aspartate 185 together coordinate Zn(2+). Asparagine 186 carries N-linked (GlcNAc...) asparagine glycosylation. The Zn(2+) site is built by glutamate 224 and aspartate 251. Cysteine 291 and cysteine 295 form a disulfide bridge. Histidine 324 is a Zn(2+) binding site.

Belongs to the peptidase M28 family. M28E subfamily. Monomer. Requires Zn(2+) as cofactor.

The protein localises to the secreted. Probable extracellular aminopeptidase which contributes to pathogenicity. The chain is Probable leucine aminopeptidase MCYG_04170 from Arthroderma otae (strain ATCC MYA-4605 / CBS 113480) (Microsporum canis).